The sequence spans 180 residues: ATP-dependent protease subunit HslV (180 aa).

The active site involves Thr8. Positions 165, 168, and 171 each coordinate Na(+).

The protein belongs to the peptidase T1B family. HslV subfamily. A double ring-shaped homohexamer of HslV is capped on each side by a ring-shaped HslU homohexamer. The assembly of the HslU/HslV complex is dependent on binding of ATP.

The protein localises to the cytoplasm. The enzyme catalyses ATP-dependent cleavage of peptide bonds with broad specificity.. Its activity is regulated as follows. Allosterically activated by HslU binding. Protease subunit of a proteasome-like degradation complex believed to be a general protein degrading machinery. In Macrococcus caseolyticus (strain JCSC5402) (Macrococcoides caseolyticum), this protein is ATP-dependent protease subunit HslV.